The sequence spans 94 residues: U1-theraphotoxin-Sp1a (94 aa).

A signal peptide spans Met1–Gly22. Positions Asp23–Arg58 are excised as a propeptide. Cystine bridges form between Cys60/Cys78, Cys67/Cys83, and Cys77/Cys88. Val92 bears the Valine amide mark.

It belongs to the neurotoxin 14 (magi-1) family. OAIP-1 subfamily. As to expression, expressed by the venom gland.

The protein resides in the secreted. In terms of biological role, probable ion channel inhibitor. Shows insecticidal activity. Acts synergistically with the neonicotinoid insecticide imidacloprid. Is neither a repellent that repels insects nor an attractant that is preferentially consumed by insects. Is very stable. The polypeptide is U1-theraphotoxin-Sp1a (Selenotypus plumipes (Australian featherleg tarantula)).